Consider the following 270-residue polypeptide: Regulatory protein RecX (270 aa).

The protein belongs to the RecX family.

The protein localises to the cytoplasm. In terms of biological role, modulates RecA activity. The polypeptide is Regulatory protein RecX (Bacillus mycoides (strain KBAB4) (Bacillus weihenstephanensis)).